A 326-amino-acid chain; its full sequence is Ketol-acid reductoisomerase (NADP(+)) (326 aa).

The KARI N-terminal Rossmann domain maps to 2-182 (AKIYGDEDAS…GFTRAGVIKT (181 aa)). Residues 25 to 28 (YGSQ), R48, S53, and 83 to 86 (DEVQ) each bind NADP(+). H108 is an active-site residue. Position 134 (G134) interacts with NADP(+). One can recognise a KARI C-terminal knotted domain in the interval 183-325 (TFREEVETDL…ERLRKMMGFE (143 aa)). Residues D191, E195, E227, and E231 each contribute to the Mg(2+) site. S252 provides a ligand contact to substrate.

Belongs to the ketol-acid reductoisomerase family. Requires Mg(2+) as cofactor.

The enzyme catalyses (2R)-2,3-dihydroxy-3-methylbutanoate + NADP(+) = (2S)-2-acetolactate + NADPH + H(+). It catalyses the reaction (2R,3R)-2,3-dihydroxy-3-methylpentanoate + NADP(+) = (S)-2-ethyl-2-hydroxy-3-oxobutanoate + NADPH + H(+). It functions in the pathway amino-acid biosynthesis; L-isoleucine biosynthesis; L-isoleucine from 2-oxobutanoate: step 2/4. Its pathway is amino-acid biosynthesis; L-valine biosynthesis; L-valine from pyruvate: step 2/4. In terms of biological role, involved in the biosynthesis of branched-chain amino acids (BCAA). Catalyzes an alkyl-migration followed by a ketol-acid reduction of (S)-2-acetolactate (S2AL) to yield (R)-2,3-dihydroxy-isovalerate. In the isomerase reaction, S2AL is rearranged via a Mg-dependent methyl migration to produce 3-hydroxy-3-methyl-2-ketobutyrate (HMKB). In the reductase reaction, this 2-ketoacid undergoes a metal-dependent reduction by NADPH to yield (R)-2,3-dihydroxy-isovalerate. This is Ketol-acid reductoisomerase (NADP(+)) from Methanopyrus kandleri (strain AV19 / DSM 6324 / JCM 9639 / NBRC 100938).